Here is a 215-residue protein sequence, read N- to C-terminus: Ribonuclease T (215 aa).

Positions 20–194 constitute an Exonuclease domain; that stretch reads VVIDVETAGF…YDTERTAVLF (175 aa). Mg(2+) contacts are provided by aspartate 23, glutamate 25, histidine 181, and aspartate 186. Catalysis depends on histidine 181, which acts as the Proton donor/acceptor.

This sequence belongs to the RNase T family. As to quaternary structure, homodimer. Mg(2+) serves as cofactor.

Functionally, trims short 3' overhangs of a variety of RNA species, leaving a one or two nucleotide 3' overhang. Responsible for the end-turnover of tRNA: specifically removes the terminal AMP residue from uncharged tRNA (tRNA-C-C-A). Also appears to be involved in tRNA biosynthesis. The protein is Ribonuclease T of Citrobacter koseri (strain ATCC BAA-895 / CDC 4225-83 / SGSC4696).